Here is a 3414-residue protein sequence, read N- to C-terminus: MVKKAILKGKGGGPPRRVSKETATKTRQPRVQMPNGLVLMRMMGILWHAVAGTARNPVLKAFWNSVPLKQATAALRKIKRTVSALMVGLQKRGKRRSATDWMSWLLVITLLGMTLAATVRKERDGSTVIRAEGKDAATQVRVENGTCVILATDMGSWCDDSLSYECVTIDQGEEPVDVDCFCRNVDGVYLEYGRCGKQEGSRTRRSVLIPSHAQGELTGRGHKWLEGDSLRTHLTRVEGWVWKNKLLALAMVTVVWLTLESVVTRVAVLVVLLCLAPVYASRCTHLENRDFVTGTQGTTRVTLVLELGGCVTITAEGKPSMDVWLDAIYQENPAKTREYCLHAKLSDTKVAARCPTMGPATLAEEHQGGTVCKRDQSDRGWGNHCGLFGKGSIVACVKAACEAKKKATGHVYDANKIVYTVKVEPHTGDYVAANETHSGRKTASFTISSEKTILTMGEYGDVSLLCRVASGVDLAQTVILELDKTVEHLPTAWQVHRDWFNDLALPWKHEGAQNWNNAERLVEFGAPHAVKMDVYNLGDQTGVLLKALAGVPVAHIEGTKYHLKSGHVTCEVGLEKLKMKGLTYTMCDKTKFTWKRAPTDSGHDTVVMEVTFSGTKPCRIPVRAVAHGSPDVNVAMLITPNPTIENNGGGFIEMQLPPGDNIIYVGELSHQWFQKGSSIGRVFQKTKKGIERLTVIGEHAWDFGSAGGFLSSIGKAVHTVLGGAFNSIFGGVGFLPKLLLGVALAWLGLNMRNPTMSMSFLLAGGLVLAMTLGVGADVGCAVDTERMELRCGEGLVVWREVSEWYDNYAYYPETPGALASAIKETFEEGSCGVVPQNRLEMAMWRSSVTELNLALAEGEANLTVVVDKFDPTDYRGGVPGLLKKGKDIKVSWKSWGHSMIWSIPEAPRRFMVGTEGQSECPLERRKTGVFTVAEFGVGLRTKVFLDFRQEPTHECDTGVMGAAVKNGMAIHTDQSLWMRSMKNDTGTYIVELLVTDLRNCSWPASHTIDNADVVDSELFLPASLAGPRSWYNRIPGYSEQVKGPWKYTPIRVIREECPGTTVTINAKCDKRGASVRSTTESGKVIPEWCCRACTMPPVTFRTGTDCWYAMEIRPVHDQGGLVRSMVVADNGELLSEGGVPGIVALFVVLEYIIRRRPSTGTTVVWGGIVVLALLVTGMVRIESLVRYVVAVGITFHLELGPEIVALMLLQAVFELRVGLLSAFALRRSLTVREMVTTYFLLLVLELGLPGASLEEFWKWGDALAMGALIFRACTAEGKTGAGLLLMALMTQQDVVTVHHGLVCFLSVASACSVWRLLKGHREQKGLTWVVPLAGLLGGEGSGIRLLAFWELSAHRGRRSFSEPLTVVGVMLTLASGMMRHTSQEALCALAVASFLLLMLVLGTRKMQLVAEWSGCVEWYPELVNEGGEVSLRVRQDAMGNFHLTELEKEERMMAFWLIAGLAASAIHWSGILGVMGLWTLTEMLRSSRRSDLVFSGQGGRERGDRPFEVKDGVYRIFSPGLFWGQNQVGVGYGSKGVLHTMWHVTRGAALSIDDAVAGPYWADVREDVVCYGGAWSLEEKWKGETVQVHAFPPGRAHEVHQCQPGELILDTGRKLGAIPIDLVKGTSGSPILNAQGVVVGLYGNGLKTNETYVSSIAQGEAEKSRPNLPQAVVGTGWTSKGQITVLDMHPGSGKTHRVLPELIRQCIDRRLRTLVLAPTRVVLKEMERALNGKRVRFHSPAVSDQQAGGAIVDVMCHATYVNRRLLPQGRQNWEVAIMDEAHWTDPHSIAARGHLYTLAKENKCALVLMTATPPGKSEPFPESNGAITSEERQIPDGEWRDGFDWITEYEGRTAWFVPSIAKGGAIARTLRQKGKSVICLNSKTFEKDYSRVRDEKPDFVVTTDISEMGANLDVSRVIDGRTNIKPEEVDGKVELTGTRRVTTASAAQRRGRVGRQDGRTDEYIYSGQCDDDDSGLVQWKEAQILLDNITTLRGPVATFYGPEQDKMPEVAGHFRLTEEKRKHFRHLLTHCDFTPWLAWHVAANVSSVTDRSWTWEGPEANAVDEASGDLVTFRSPNGAERTLRPVWKDARMFKEGRDIKEFVAYASGRRSFGDVLTGMSGVPELLRHRCVSALDVFYTLMHEEPGSRAMRMAERDAPEAFLTMVEMMVLGLATLGVIWCFVVRTSISRMMLGTLVLLASLLLLWAGGVGYGNMAGVALIFYTLLTVLQPEAGKQRSSDDNKLAYFLLTLCSLAGLVAANEMGFLEKTKADLSTALWSEREEPRPWSEWTNVDIQPARSWGTYVLVVSLFTPYIIHQLQTKIQQLVNSAVASGAQAMRDLGGGAPFFGVAGHVMTLGVVSLIGATPTSLMVGVGLAALHLAIVVSGLEAELTQRAHKVFFSAMVRNPMVDGDVINPFGEGEAKPALYERKMSLVLATVLCLMSVVMNRTVASITEASAVGLAAAGQLLRPEADTLWTMPVACGMSGVVRGSLWGFLPLGHRLWLRASGGRRGGSEGDTLGDLWKRRLNNCTREEFFVYRRTGILETERDKARELLRRGETNVGLAVSRGTAKLAWLEERGYATLKGEVVDLGCGRGGWSYYAASRPAVMSVRAYTIGGKGHEAPKMVTSLGWNLIKFRSGMDVFSMQPHRADTVMCDIGESSPDAAVEGERTRKVILLMEQWKNRNPTAACVFKVLAPYRPEVIEALHRFQLQWGGGLVRTPFSRNSTHEMYYSTAVTGNIVNSVNVQSRKLLARFGDQRGPTKVPELDLGVGTRCVVLAEDKVKEQDVQERIRALREQYSETWHMDEEHPYRTWQYWGSYRTAPTGSAASLINGVVKLLSWPWNAREDVVRMAMTDTTAFGQQRVFKDKVDTKAQEPQPGTRVIMRAVNDWILERLAQKSKPRMCSREEFIAKVKSNAALGAWSDEQNRWASAREAVEDPAFWRLVDEERERHLMGRCAHCVYNMMGKREKKLGEFGVAKGSRAIWYMWLGSRFLEFEALGFLNEDHWASRESSGAGVEGISLNYLGWHLKKLSTLNGGLFYADDTAGWDTKVTNADLEDEEQILRYMEGEHKQLATTIMQKAYHAKVVKVARPSRDGGCIMDVITRRDQRGSGQVVTYALNTLTNIKVQLIRMMEGEGVIEAADAHNPRLLRVERWLKEHGEERLGRMLVSGDDCVVRPLDDRFGKALYFLNDMAKTRKDIGEWEHSAGFSSWEEVPFCSHHFHELVMKDGRTLVVPCRDQDELVGRARISPGCGWSVRETACLSKAYGQMWLLSYFHRRDLRTLGLAINSAVPADWVPTGRTTWSIHASGAWMTTEDMLDVWNRVWILDNPFMQNKERVMEWRDVPYLPKAQDMLCSSLVGRRERAEWAKNIWGAVEKVRKMIGPEKFKDYLSCMDRHDLHWELRLESSII.

Residues 1 to 30 (MVKKAILKGKGGGPPRRVSKETATKTRQPR) are disordered. The Cytoplasmic segment spans residues 2-98 (VKKAILKGKG…LQKRGKRRSA (97 aa)). A propeptide spans 97–117 (SATDWMSWLLVITLLGMTLAA) (ER anchor for the capsid protein C, removed in mature form by serine protease NS3). Residues 99-119 (TDWMSWLLVITLLGMTLAATV) traverse the membrane as a helical segment. At 120 to 242 (RKERDGSTVI…HLTRVEGWVW (123 aa)) the chain is on the extracellular side. Residue Asn-144 is glycosylated (N-linked (GlcNAc...) asparagine; by host). Residues 243–260 (KNKLLALAMVTVVWLTLE) form a helical membrane-spanning segment. A topological domain (cytoplasmic) is located at residue Ser-261. Residues 262-280 (VVTRVAVLVVLLCLAPVYA) traverse the membrane as a helical segment. Over 281–727 (SRCTHLENRD…HTVLGGAFNS (447 aa)) the chain is Extracellular. 6 cysteine pairs are disulfide-bonded: Cys-283/Cys-310, Cys-340/Cys-396, Cys-340/Cys-401, Cys-354/Cys-385, Cys-372/Cys-396, and Cys-372/Cys-401. The tract at residues 378–391 (DRGWGNHCGLFGKG) is fusion peptide. Asn-434 carries an N-linked (GlcNAc...) asparagine; by host glycan. Disulfide bonds link Cys-466/Cys-570 and Cys-587/Cys-618. Residues 728–748 (IFGGVGFLPKLLLGVALAWLG) traverse the membrane as a helical segment. The Extracellular segment spans residues 749-755 (LNMRNPT). A helical membrane pass occupies residues 756 to 776 (MSMSFLLAGGLVLAMTLGVGA). Residues 777 to 1132 (DVGCAVDTER…RSMVVADNGE (356 aa)) lie on the Extracellular side of the membrane. Intrachain disulfides connect Cys-780–Cys-791, Cys-831–Cys-920, Cys-955–Cys-1000, Cys-1057–Cys-1106, Cys-1068–Cys-1090, and Cys-1089–Cys-1093. N-linked (GlcNAc...) asparagine; by host glycans are attached at residues Asn-861, Asn-983, and Asn-999. A helical transmembrane segment spans residues 1133–1153 (LLSEGGVPGIVALFVVLEYII). The Cytoplasmic segment spans residues 1154 to 1158 (RRRPS). Residues 1159–1179 (TGTTVVWGGIVVLALLVTGMV) form a helical membrane-spanning segment. The Lumenal portion of the chain corresponds to 1180-1187 (RIESLVRY). The chain crosses the membrane as a helical span at residues 1188–1208 (VVAVGITFHLELGPEIVALML). The Cytoplasmic portion of the chain corresponds to 1209-1293 (LQAVFELRVG…LLMALMTQQD (85 aa)). A helical membrane pass occupies residues 1294–1314 (VVTVHHGLVCFLSVASACSVW). Over 1315–1327 (RLLKGHREQKGLT) the chain is Lumenal. Residues 1328-1348 (WVVPLAGLLGGEGSGIRLLAF) traverse the membrane as a helical segment. Residues 1349–1359 (WELSAHRGRRS) lie on the Cytoplasmic side of the membrane. The chain crosses the membrane as a helical span at residues 1360–1378 (FSEPLTVVGVMLTLASGMM). Residues 1379 to 1382 (RHTS) are Lumenal-facing. The chain crosses the membrane as a helical span at residues 1383–1403 (QEALCALAVASFLLLMLVLGT). At 1404–1454 (RKMQLVAEWSGCVEWYPELVNEGGEVSLRVRQDAMGNFHLTELEKEERMMA) the chain is on the cytoplasmic side. An interacts with and activates NS3 protease region spans residues 1410 to 1449 (AEWSGCVEWYPELVNEGGEVSLRVRQDAMGNFHLTELEKE). Positions 1455–1475 (FWLIAGLAASAIHWSGILGVM) form an intramembrane region, helical. The Cytoplasmic portion of the chain corresponds to 1476-2160 (GLWTLTEMLR…RMAERDAPEA (685 aa)). The Peptidase S7 domain maps to 1490-1669 (SDLVFSGQGG…EAEKSRPNLP (180 aa)). Residues His-1543, Asp-1567, and Ser-1627 each act as charge relay system; for serine protease NS3 activity in the active site. Positions 1675-1831 (TGWTSKGQIT…ESNGAITSEE (157 aa)) constitute a Helicase ATP-binding domain. 1688-1695 (MHPGSGKT) contributes to the ATP binding site. The DEAH box motif lies at 1779–1782 (DEAH). Residues 1841-2000 (DGFDWITEYE…TLRGPVATFY (160 aa)) enclose the Helicase C-terminal domain. The residue at position 1883 (Lys-1883) is an N6-acetyllysine; by host. Residues 2161–2181 (FLTMVEMMVLGLATLGVIWCF) traverse the membrane as a helical segment. At 2182–2189 (VVRTSISR) the chain is on the lumenal side. The segment at residues 2190-2210 (MMLGTLVLLASLLLLWAGGVG) is an intramembrane region (helical). A topological domain (lumenal) is located at residue Tyr-2211. Residues 2212 to 2232 (GNMAGVALIFYTLLTVLQPEA) form a helical membrane-spanning segment. The Cytoplasmic segment spans residues 2233-2244 (GKQRSSDDNKLA). The chain crosses the membrane as a helical span at residues 2245 to 2265 (YFLLTLCSLAGLVAANEMGFL). The Lumenal segment spans residues 2266–2299 (EKTKADLSTALWSEREEPRPWSEWTNVDIQPARS). Residues 2300–2320 (WGTYVLVVSLFTPYIIHQLQT) constitute an intramembrane region (helical). At 2321-2343 (KIQQLVNSAVASGAQAMRDLGGG) the chain is on the lumenal side. Residues 2344–2364 (APFFGVAGHVMTLGVVSLIGA) constitute an intramembrane region (helical). Topologically, residues 2365-2368 (TPTS) are lumenal. Residues 2369 to 2389 (LMVGVGLAALHLAIVVSGLEA) form a helical membrane-spanning segment. Topologically, residues 2390–2432 (ELTQRAHKVFFSAMVRNPMVDGDVINPFGEGEAKPALYERKMS) are cytoplasmic. The helical transmembrane segment at 2433–2453 (LVLATVLCLMSVVMNRTVASI) threads the bilayer. The Lumenal portion of the chain corresponds to 2454 to 2477 (TEASAVGLAAAGQLLRPEADTLWT). The chain crosses the membrane as a helical span at residues 2478-2498 (MPVACGMSGVVRGSLWGFLPL). The Cytoplasmic segment spans residues 2499 to 3414 (GHRLWLRASG…WELRLESSII (916 aa)). Residues 2512–2776 (GGSEGDTLGD…ELDLGVGTRC (265 aa)) form the mRNA cap 0-1 NS5-type MT domain. An S-adenosyl-L-methionine-binding site is contributed by Ser-2567. A Phosphoserine modification is found at Ser-2567. Residue Lys-2572 is the For 2'-O-MTase activity of the active site. S-adenosyl-L-methionine contacts are provided by Gly-2597, Trp-2598, Thr-2615, Ile-2616, Asp-2642, and Val-2643. The For 2'-O-MTase activity role is filled by Asp-2657. An S-adenosyl-L-methionine-binding site is contributed by Ile-2658. Catalysis depends on for 2'-O-MTase activity residues Lys-2694 and Glu-2730. The segment at 2730–2734 (EMYYS) is interaction with host SCRIB. Tyr-2732 serves as a coordination point for S-adenosyl-L-methionine. Zn(2+)-binding residues include Glu-2950, His-2954, Cys-2959, and Cys-2962. The 150-residue stretch at 3040–3189 (GLFYADDTAG…RPLDDRFGKA (150 aa)) folds into the RdRp catalytic domain. Zn(2+) is bound by residues His-3224, Cys-3240, and Cys-3359.

In the N-terminal section; belongs to the class I-like SAM-binding methyltransferase superfamily. mRNA cap 0-1 NS5-type methyltransferase family. In terms of assembly, homodimer. Interacts (via N-terminus) with host EXOC1 (via C-terminus); this interaction results in EXOC1 degradation through the proteasome degradation pathway. As to quaternary structure, forms heterodimers with envelope protein E in the endoplasmic reticulum and Golgi. Homodimer; in the endoplasmic reticulum and Golgi. Interacts with protein prM. Interacts with non-structural protein 1. In terms of assembly, homodimer; Homohexamer when secreted. Interacts with envelope protein E. As to quaternary structure, interacts (via N-terminus) with serine protease NS3. Forms a heterodimer with serine protease NS3. May form homooligomers. In terms of assembly, forms a heterodimer with NS2B. Interacts with NS4B. Interacts with unphosphorylated RNA-directed RNA polymerase NS5; this interaction stimulates RNA-directed RNA polymerase NS5 guanylyltransferase activity. As to quaternary structure, interacts with serine protease NS3. Interacts with NS1. Homodimer. Interacts with host STAT2; this interaction inhibits the phosphorylation of the latter, and, when all viral proteins are present (polyprotein), targets STAT2 for degradation. Interacts with serine protease NS3. Interacts with host SCRIB; this interaction targets NS5 to the cell membrane periphery and nucleus, thereby allowing efficient host nuclear STAT1 inhibition. In terms of processing, specific enzymatic cleavages in vivo yield mature proteins. Cleavages in the lumen of endoplasmic reticulum are performed by host signal peptidase, whereas cleavages in the cytoplasmic side are performed by serine protease NS3. Signal cleavage at the 2K-4B site requires a prior NS3 protease-mediated cleavage at the 4A-2K site. Cleaved in post-Golgi vesicles by a host furin, releasing the mature small envelope protein M, and peptide pr. This cleavage is incomplete as up to 30% of viral particles still carry uncleaved prM. Post-translationally, N-glycosylated. In terms of processing, N-glycosylated. The excreted form is glycosylated and this is required for efficient secretion of the protein from infected cells. Acetylated by host KAT5. Acetylation modulates NS3 RNA-binding and unwinding activities and plays an important positive role for viral replication. Post-translationally, phosphorylated on serines residues. This phosphorylation may trigger NS5 nuclear localization.

It is found in the virion. The protein resides in the host nucleus. The protein localises to the host cytoplasm. Its subcellular location is the host perinuclear region. It localises to the secreted. It is found in the virion membrane. The protein resides in the host endoplasmic reticulum membrane. The enzyme catalyses Selective hydrolysis of -Xaa-Xaa-|-Yaa- bonds in which each of the Xaa can be either Arg or Lys and Yaa can be either Ser or Ala.. It catalyses the reaction RNA(n) + a ribonucleoside 5'-triphosphate = RNA(n+1) + diphosphate. The catalysed reaction is a ribonucleoside 5'-triphosphate + H2O = a ribonucleoside 5'-diphosphate + phosphate + H(+). It carries out the reaction ATP + H2O = ADP + phosphate + H(+). The enzyme catalyses a 5'-end (5'-triphosphoguanosine)-ribonucleoside in mRNA + S-adenosyl-L-methionine = a 5'-end (N(7)-methyl 5'-triphosphoguanosine)-ribonucleoside in mRNA + S-adenosyl-L-homocysteine. It catalyses the reaction a 5'-end (N(7)-methyl 5'-triphosphoguanosine)-ribonucleoside in mRNA + S-adenosyl-L-methionine = a 5'-end (N(7)-methyl 5'-triphosphoguanosine)-(2'-O-methyl-ribonucleoside) in mRNA + S-adenosyl-L-homocysteine + H(+). Plays a role in virus budding by binding to the cell membrane and gathering the viral RNA into a nucleocapsid that forms the core of a mature virus particle. During virus entry, may induce genome penetration into the host cytoplasm after hemifusion induced by the surface proteins. Can migrate to the cell nucleus where it modulates host functions. Functionally, inhibits RNA silencing by interfering with host Dicer. Its function is as follows. Prevents premature fusion activity of envelope proteins in trans-Golgi by binding to envelope protein E at pH6.0. After virion release in extracellular space, gets dissociated from E dimers. In terms of biological role, acts as a chaperone for envelope protein E during intracellular virion assembly by masking and inactivating envelope protein E fusion peptide. prM is the only viral peptide matured by host furin in the trans-Golgi network probably to avoid catastrophic activation of the viral fusion activity in acidic Golgi compartment prior to virion release. prM-E cleavage is inefficient, and many virions are only partially matured. These uncleaved prM would play a role in immune evasion. May play a role in virus budding. Exerts cytotoxic effects by activating a mitochondrial apoptotic pathway through M ectodomain. May display a viroporin activity. Functionally, binds to host cell surface receptor and mediates fusion between viral and cellular membranes. Envelope protein is synthesized in the endoplasmic reticulum in the form of heterodimer with protein prM. They play a role in virion budding in the ER, and the newly formed immature particle is covered with 60 spikes composed of heterodimer between precursor prM and envelope protein E. The virion is transported to the Golgi apparatus where the low pH causes dissociation of PrM-E heterodimers and formation of E homodimers. prM-E cleavage is inefficient, and many virions are only partially matured. These uncleaved prM would play a role in immune evasion. Its function is as follows. Involved in immune evasion, pathogenesis and viral replication. Once cleaved off the polyprotein, is targeted to three destinations: the viral replication cycle, the plasma membrane and the extracellular compartment. Essential for viral replication. Required for formation of the replication complex and recruitment of other non-structural proteins to the ER-derived membrane structures. Excreted as a hexameric lipoparticle that plays a role against host immune response. Antagonizing the complement function. Binds to the host macrophages and dendritic cells. Inhibits signal transduction originating from Toll-like receptor 3 (TLR3). In terms of biological role, component of the viral RNA replication complex that functions in virion assembly and antagonizes the host immune response. Required cofactor for the serine protease function of NS3. May have membrane-destabilizing activity and form viroporins. Functionally, displays three enzymatic activities: serine protease, NTPase and RNA helicase. NS3 serine protease, in association with NS2B, performs its autocleavage and cleaves the polyprotein at dibasic sites in the cytoplasm: C-prM, NS2A-NS2B, NS2B-NS3, NS3-NS4A, NS4A-2K and NS4B-NS5. NS3 RNA helicase binds RNA and unwinds dsRNA in the 3' to 5' direction. Its function is as follows. Regulates the ATPase activity of the NS3 helicase activity. NS4A allows NS3 helicase to conserve energy during unwinding. In terms of biological role, functions as a signal peptide for NS4B and is required for the interferon antagonism activity of the latter. Induces the formation of ER-derived membrane vesicles where the viral replication takes place. Inhibits interferon (IFN)-induced host STAT1 phosphorylation and nuclear translocation, thereby preventing the establishment of cellular antiviral state by blocking the IFN-alpha/beta pathway. Inhibits STAT2 translocation in the nucleus after IFN-alpha treatment. Functionally, replicates the viral (+) and (-) genome, and performs the capping of genomes in the cytoplasm. NS5 methylates viral RNA cap at guanine N-7 and ribose 2'-O positions. Besides its role in RNA genome replication, also prevents the establishment of cellular antiviral state by blocking the interferon-alpha/beta (IFN-alpha/beta) signaling pathway. Inhibits host TYK2 and STAT2 phosphorylation, thereby preventing activation of JAK-STAT signaling pathway. This is Genome polyprotein from Tick-borne encephalitis virus European subtype (strain Neudoerfl) (NEUV).